The following is a 219-amino-acid chain: 3,4-dihydroxy-2-butanone 4-phosphate synthase (219 aa).

D-ribulose 5-phosphate contacts are provided by residues 37-38, Asp42, 150-154, and Glu174; these read RE and RRGHT. Glu38 contributes to the Mg(2+) binding site. Position 153 (His153) interacts with Mg(2+).

The protein belongs to the DHBP synthase family. In terms of assembly, homodimer. Mg(2+) serves as cofactor. The cofactor is Mn(2+).

It catalyses the reaction D-ribulose 5-phosphate = (2S)-2-hydroxy-3-oxobutyl phosphate + formate + H(+). It participates in cofactor biosynthesis; riboflavin biosynthesis; 2-hydroxy-3-oxobutyl phosphate from D-ribulose 5-phosphate: step 1/1. Catalyzes the conversion of D-ribulose 5-phosphate to formate and 3,4-dihydroxy-2-butanone 4-phosphate. The sequence is that of 3,4-dihydroxy-2-butanone 4-phosphate synthase from Edwardsiella ictaluri (strain 93-146).